The following is a 146-amino-acid chain: MNSLSIFFIVVATAAVCLLFIQGYSIYENYGNIKEFNATHAAFEYSKSIGGTPALDRRVQDVNDTISDVKQKWRCVAYPGNGFVSASIFGFQAEVGPNNTRSIRKFNTMAQCIDFTFSDVINIDIYNPCVAPNINNVECQFLKSVL.

The helical; Signal-anchor for type III membrane protein transmembrane segment at 1 to 21 threads the bilayer; sequence MNSLSIFFIVVATAAVCLLFI. The Intravirion portion of the chain corresponds to 22–146; it reads QGYSIYENYG…VECQFLKSVL (125 aa).

The protein belongs to the orthopoxvirus OPG155 protein family. In terms of assembly, part of a stable entry-fusion complex (EFC) which is at least composed of proteins OPG143, OPG147, OPG155, OPG086, OPG094, OPG107, OPG104, and OPG099. Formation of the viral membrane is necessary for the assembly of the complex. Interacts directly with protein OPG107. Contains two intramolecular disulfide bonds. They are created by the viral disulfide bond formation pathway, a poxvirus-specific pathway that operates on the cytoplasmic side of the MV membranes.

The protein resides in the virion membrane. Envelope protein required for virus entry into host cell and for cell-cell fusion (syncytium formation). This Variola virus (isolate Human/India/Ind3/1967) (VARV) protein is Envelope protein OPG155 (OPG155).